Reading from the N-terminus, the 467-residue chain is UDP-N-acetylmuramate--L-alanine ligase (467 aa).

112-118 (GTHGKTT) contacts ATP.

Belongs to the MurCDEF family.

It localises to the cytoplasm. The enzyme catalyses UDP-N-acetyl-alpha-D-muramate + L-alanine + ATP = UDP-N-acetyl-alpha-D-muramoyl-L-alanine + ADP + phosphate + H(+). The protein operates within cell wall biogenesis; peptidoglycan biosynthesis. Its function is as follows. Cell wall formation. This is UDP-N-acetylmuramate--L-alanine ligase from Polaromonas sp. (strain JS666 / ATCC BAA-500).